Consider the following 131-residue polypeptide: Tegument protein ORF52 (131 aa).

Positions 103 to 131 (SDGGTAKPPPGANNRRRRGASTTRAGVDD) are disordered. Residues 122–131 (ASTTRAGVDD) show a composition bias toward low complexity. Ser123 carries the phosphoserine; by host modification.

The protein belongs to the herpesviridae BLRF2 family. Homooligomer; homooligomerizes and binds double-stranded DNA (dsDNA) cooperatively. Interacts with host CGAS. Interacts with PQBP1.

The protein localises to the host cytoplasm. Its subcellular location is the virion tegument. In terms of biological role, plays a role in the inhibition of host innate immune system by targeting the CGAS enzymatic activity which is the principal cytosolic DNA sensor that detects invading viral DNA. Acts by inhibiting CGAS-DNA phase separation: directly binds double-stranded DNA (dsDNA) in a length dependent but sequence independent manner and is able to form DNA-induced phase separation in infected cells. DNA phase separation of ORF52 mediates disruption of liquid-like droplets in which CGAS is activated, thereby preventing CGAS activity. Targets also the HDP-RNP complex composed of DNA-PK subunits and paraspeckle proteins. This complex is a key nuclear regulator of DNA-mediated activation of innate immune response through the cGAS-STING pathway. In Homo sapiens (Human), this protein is Tegument protein ORF52.